The following is a 466-amino-acid chain: Glutamate--tRNA ligase (466 aa).

The 'HIGH' region motif lies at 10–20 (PSPTGALHIGG). Residues Cys-99, Cys-101, Cys-126, and Asp-128 each coordinate Zn(2+). A 'KMSKS' region motif is present at residues 239 to 243 (KLSKR). An ATP-binding site is contributed by Lys-242.

Belongs to the class-I aminoacyl-tRNA synthetase family. Glutamate--tRNA ligase type 1 subfamily. As to quaternary structure, monomer. Zn(2+) is required as a cofactor.

Its subcellular location is the cytoplasm. The enzyme catalyses tRNA(Glu) + L-glutamate + ATP = L-glutamyl-tRNA(Glu) + AMP + diphosphate. Functionally, catalyzes the attachment of glutamate to tRNA(Glu) in a two-step reaction: glutamate is first activated by ATP to form Glu-AMP and then transferred to the acceptor end of tRNA(Glu). The polypeptide is Glutamate--tRNA ligase (Pelagibacter ubique (strain HTCC1062)).